We begin with the raw amino-acid sequence, 251 residues long: FKBP-type peptidyl-prolyl cis-trans isomerase FkpA (251 aa).

A PPIase FKBP-type domain is found at 164–251; that stretch reads SDVITVHYKG…EIELIDIQSK (88 aa).

The protein belongs to the FKBP-type PPIase family.

It catalyses the reaction [protein]-peptidylproline (omega=180) = [protein]-peptidylproline (omega=0). Functionally, PPIases accelerate the folding of proteins. It catalyzes the cis-trans isomerization of proline imidic peptide bonds in oligopeptides. This chain is FKBP-type peptidyl-prolyl cis-trans isomerase FkpA (fkpA), found in Buchnera aphidicola subsp. Baizongia pistaciae (strain Bp).